Consider the following 285-residue polypeptide: Glutamate racemase (285 aa).

Substrate contacts are provided by residues 28–29 (DS) and 60–61 (YG). Cys92 functions as the Proton donor/acceptor in the catalytic mechanism. 93–94 (NT) is a binding site for substrate. Cys204 functions as the Proton donor/acceptor in the catalytic mechanism. 205–206 (TH) contacts substrate.

The protein belongs to the aspartate/glutamate racemases family.

It carries out the reaction L-glutamate = D-glutamate. Its pathway is cell wall biogenesis; peptidoglycan biosynthesis. Functionally, provides the (R)-glutamate required for cell wall biosynthesis. This is Glutamate racemase from Escherichia coli O9:H4 (strain HS).